The primary structure comprises 166 residues: Small ribosomal subunit protein uS5 (166 aa).

Residues 11 to 74 enclose the S5 DRBM domain; the sequence is LREKLVAINR…EKARANMKRV (64 aa).

It belongs to the universal ribosomal protein uS5 family. Part of the 30S ribosomal subunit. Contacts proteins S4 and S8.

With S4 and S12 plays an important role in translational accuracy. Its function is as follows. Located at the back of the 30S subunit body where it stabilizes the conformation of the head with respect to the body. The polypeptide is Small ribosomal subunit protein uS5 (Alkalilimnicola ehrlichii (strain ATCC BAA-1101 / DSM 17681 / MLHE-1)).